The primary structure comprises 138 residues: Thyrotropin subunit beta (138 aa).

An N-terminal signal peptide occupies residues 1–20 (MTALFLMSMLFGLTCGQAMS). Intrachain disulfides connect Cys-22–Cys-72, Cys-36–Cys-87, Cys-39–Cys-125, Cys-47–Cys-103, Cys-51–Cys-105, and Cys-108–Cys-115. Residue Asn-43 is glycosylated (N-linked (GlcNAc...) asparagine). Residues 133–138 (LVGFSV) constitute a propeptide that is removed on maturation.

The protein belongs to the glycoprotein hormones subunit beta family. In terms of assembly, heterodimer of a common alpha chain and a unique beta chain which confers biological specificity to thyrotropin, lutropin, follitropin and gonadotropin.

It localises to the secreted. Functionally, indispensable for the control of thyroid structure and metabolism. This Homo sapiens (Human) protein is Thyrotropin subunit beta (TSHB).